Consider the following 240-residue polypeptide: Proteasome subunit alpha (240 aa).

The protein belongs to the peptidase T1A family. The 20S proteasome core is composed of 14 alpha and 14 beta subunits that assemble into four stacked heptameric rings, resulting in a barrel-shaped structure. The two inner rings, each composed of seven catalytic beta subunits, are sandwiched by two outer rings, each composed of seven alpha subunits. The catalytic chamber with the active sites is on the inside of the barrel. Has a gated structure, the ends of the cylinder being occluded by the N-termini of the alpha-subunits. Is capped at one or both ends by the proteasome regulatory ATPase, PAN.

Its subcellular location is the cytoplasm. With respect to regulation, the formation of the proteasomal ATPase PAN-20S proteasome complex, via the docking of the C-termini of PAN into the intersubunit pockets in the alpha-rings, triggers opening of the gate for substrate entry. Interconversion between the open-gate and close-gate conformations leads to a dynamic regulation of the 20S proteasome proteolysis activity. Functionally, component of the proteasome core, a large protease complex with broad specificity involved in protein degradation. The chain is Proteasome subunit alpha from Metallosphaera sedula (strain ATCC 51363 / DSM 5348 / JCM 9185 / NBRC 15509 / TH2).